We begin with the raw amino-acid sequence, 426 residues long: Enolase (426 aa).

Q163 is a (2R)-2-phosphoglycerate binding site. E205 serves as the catalytic Proton donor. Mg(2+) contacts are provided by D242, E285, and D312. K337, R366, S367, and K388 together coordinate (2R)-2-phosphoglycerate. K337 functions as the Proton acceptor in the catalytic mechanism.

It belongs to the enolase family. Requires Mg(2+) as cofactor.

It localises to the cytoplasm. The protein localises to the secreted. It is found in the cell surface. The catalysed reaction is (2R)-2-phosphoglycerate = phosphoenolpyruvate + H2O. It functions in the pathway carbohydrate degradation; glycolysis; pyruvate from D-glyceraldehyde 3-phosphate: step 4/5. In terms of biological role, catalyzes the reversible conversion of 2-phosphoglycerate (2-PG) into phosphoenolpyruvate (PEP). It is essential for the degradation of carbohydrates via glycolysis. This chain is Enolase, found in Rhodospirillum centenum (strain ATCC 51521 / SW).